A 99-amino-acid polypeptide reads, in one-letter code: Large ribosomal subunit protein bL27 (99 aa).

Positions 1–10 (MKLIFDIQLF) are excised as a propeptide.

Belongs to the bacterial ribosomal protein bL27 family. In terms of processing, the N-terminus is cleaved by ribosomal processing cysteine protease Prp.

The polypeptide is Large ribosomal subunit protein bL27 (Caldicellulosiruptor bescii (strain ATCC BAA-1888 / DSM 6725 / KCTC 15123 / Z-1320) (Anaerocellum thermophilum)).